A 346-amino-acid polypeptide reads, in one-letter code: Protein RecA (346 aa).

67-74 (GPESSGKT) is a binding site for ATP.

It belongs to the RecA family.

The protein resides in the cytoplasm. In terms of biological role, can catalyze the hydrolysis of ATP in the presence of single-stranded DNA, the ATP-dependent uptake of single-stranded DNA by duplex DNA, and the ATP-dependent hybridization of homologous single-stranded DNAs. It interacts with LexA causing its activation and leading to its autocatalytic cleavage. The polypeptide is Protein RecA (Frankia alni (strain DSM 45986 / CECT 9034 / ACN14a)).